The following is a 1084-amino-acid chain: Siderophore biosynthesis regulatory protein URBS1 (1084 aa).

3 disordered regions span residues 1-164 (MALP…QSSS), 245-283 (AEEH…RDSY), and 300-337 (RPVH…AGMR). Over residues 23 to 51 (QAAAASSSSSSSSSHHPPPRIAARPIAPA) the composition is skewed to low complexity. Composition is skewed to polar residues over residues 97 to 106 (SHHNASSTAT) and 128 to 141 (RSQS…NRSQ). Low complexity predominate over residues 150-164 (PSRSQPNSPLLQSSS). Residues 245–260 (AEEHAKMQRYSDEHPR) are compositionally biased toward basic and acidic residues. The segment at 338–362 (CSNCGVTSTPLWRRAPDGSTICNAC) adopts a GATA-type 1 zinc-finger fold. Disordered stretches follow at residues 372–405 (HRSA…REDD) and 442–472 (VSKR…KMDD). Over residues 373–385 (RSASNRLSGSDAS) the composition is skewed to polar residues. Residues 482 to 506 (CTNCQTTTTPLWRRDEDGNNICNAC) form a GATA-type 2 zinc finger. 6 disordered regions span residues 559-595 (IAPA…MREA), 643-679 (RAGA…DERD), 692-803 (THAA…TKLS), 841-940 (EAAG…SRRN), 953-1019 (AAVP…DDHW), and 1040-1084 (ARPV…APRT). Basic and acidic residues-rich tracts occupy residues 650–659 (RTSHPDDSRS) and 715–725 (RLGRSELHGES). Residues 752–781 (PHHHHHHHHHHANHASHAVHHGHHHHHHHP) are compositionally biased toward basic residues. Residues 875-888 (RGTRSGHDSIKQEA) are compositionally biased toward basic and acidic residues. Positions 961 to 970 (SPPSTVSNPA) are enriched in polar residues. The segment covering 1070-1084 (PVASSPSQAVSAPRT) has biased composition (low complexity).

The protein resides in the nucleus. Involved in the regulation of secreted ferrichrome-type siderophores. Acts directly or indirectly to repress the biosynthesis of siderophores. This chain is Siderophore biosynthesis regulatory protein URBS1 (URBS1), found in Mycosarcoma maydis (Corn smut fungus).